The chain runs to 211 residues: Interleukin-6 (211 aa).

Positions 1–24 (MKFLSARDFHPVAFLGLMLVTTTA) are cleaved as a signal peptide. 2 cysteine pairs are disulfide-bonded: Cys70–Cys76 and Cys99–Cys109.

Belongs to the IL-6 superfamily. In terms of assembly, component of a hexamer of two molecules each of IL6, IL6R and IL6ST; first binds to IL6R to associate with the signaling subunit IL6ST. Interacts with IL6R (via the N-terminal ectodomain); this interaction may be affected by IL6R-binding with SORL1, hence decreasing IL6 cis signaling. Interacts with SORL1 (via the N-terminal ectodomain); this interaction leads to IL6 internalization and lysosomal degradation. May form a trimeric complex with the soluble SORL1 ectodomain and soluble IL6R receptor; this interaction might stabilize circulating IL6, hence promoting IL6 trans signaling. Post-translationally, N- and O-glycosylated. Expressed by dendritic cells and macrophages. Expressed by activated follicular B cells. Abundantly expressed in the central nervous system (CNS), particularly the hypothalamic region.

It localises to the secreted. Functionally, cytokine with a wide variety of biological functions in immunity, tissue regeneration, and metabolism. Binds to IL6R, then the complex associates to the signaling subunit IL6ST/gp130 to trigger the intracellular IL6-signaling pathway. The interaction with the membrane-bound IL6R and IL6ST stimulates 'classic signaling', whereas the binding of IL6 and soluble IL6R to IL6ST stimulates 'trans-signaling'. Alternatively, 'cluster signaling' occurs when membrane-bound IL6:IL6R complexes on transmitter cells activate IL6ST receptors on neighboring receiver cells. In terms of biological role, IL6 is a potent inducer of the acute phase response. Rapid production of IL6 contributes to host defense during infection and tissue injury, but excessive IL6 synthesis is involved in disease pathology. In the innate immune response, is synthesized by myeloid cells, such as macrophages and dendritic cells, upon recognition of pathogens through toll-like receptors (TLRs) at the site of infection or tissue injury. In the adaptive immune response, is required for the differentiation of B-cells into immunoglolin-secreting cells. Plays a major role in the differentiation of CD4(+) T cell subsets. Essential factor for the development of T follicular helper (Tfh) cells that are required for the induction of germinal-center formation. Together with IL21, controls the early generation of Tfh cells and are critical for an effective antibody response to acute viral infection. Required to drive naive CD4(+) T cells to the Th17 lineage, through 'cluster signaling' by dendritic cells. Also required for proliferation of myeloma cells and the survival of plasmablast cells. Its function is as follows. Acts as an essential factor in bone homeostasis and on vessels directly or indirectly by induction of VEGF, resulting in increased angiogenesis activity and vascular permeability. Induces, through 'trans-signaling' and synergistically with IL1B and TNF, the production of VEGF. Involved in metabolic controls, is discharged into the bloodstream after muscle contraction increasing lipolysis and improving insulin resistance. 'Trans-signaling' in central nervous system regulates energy and glucose homeostasis. Mediates, through GLP-1, crosstalk between insulin-sensitive tissues, intestinal L cells and pancreatic islets to adapt to changes in insulin demand. Also acts as a myokine. Plays a protective role during liver injury, being required for maintenance of tissue regeneration. Also has a pivotal role in iron metabolism by regulating HAMP/hepcidin expression upon inflammation or bacterial infection. Through activation of IL6ST-YAP-NOTCH pathway, induces inflammation-induced epithelial regeneration. The sequence is that of Interleukin-6 from Mus musculus (Mouse).